Here is a 379-residue protein sequence, read N- to C-terminus: Putative cysteine desulfurase IscS 1 (379 aa).

Residues 71–72 (GT), Asn-151, Gln-179, and 199–201 (SGH) contribute to the pyridoxal 5'-phosphate site. Lys-202 bears the N6-(pyridoxal phosphate)lysine mark. Position 237 (Thr-237) interacts with pyridoxal 5'-phosphate. Residue Cys-325 is the Cysteine persulfide intermediate of the active site. A [2Fe-2S] cluster-binding site is contributed by Cys-325.

It belongs to the class-V pyridoxal-phosphate-dependent aminotransferase family. NifS/IscS subfamily. Requires pyridoxal 5'-phosphate as cofactor.

The catalysed reaction is (sulfur carrier)-H + L-cysteine = (sulfur carrier)-SH + L-alanine. Catalyzes the removal of elemental sulfur from cysteine to produce alanine. In Bacillus subtilis (strain 168), this protein is Putative cysteine desulfurase IscS 1 (iscS1).